The chain runs to 431 residues: 2-oxoisovalerate dehydrogenase subunit alpha, mitochondrial (431 aa).

Position 140 to 142 (Gln-140 to Arg-142) interacts with thiamine diphosphate. Residues Ser-189, Thr-194, and Gln-195 each coordinate K(+).

The protein belongs to the BCKDHA family. The cofactor is thiamine diphosphate.

It is found in the mitochondrion matrix. It catalyses the reaction N(6)-[(R)-lipoyl]-L-lysyl-[protein] + 3-methyl-2-oxobutanoate + H(+) = N(6)-[(R)-S(8)-2-methylpropanoyldihydrolipoyl]-L-lysyl-[protein] + CO2. It participates in lipid metabolism; fatty acid biosynthesis. The branched-chain alpha-keto dehydrogenase complex catalyzes the overall conversion of alpha-keto acids to acyl-CoA and CO(2). It contains multiple copies of three enzymatic components: branched-chain alpha-keto acid decarboxylase (E1), lipoamide acyltransferase (E2) and lipoamide dehydrogenase (E3). Required for the production of the monomethyl branched-chain fatty acids (mmBCFAs) isopentadecanoate (C15iso) and isoheptadecanoate (C17iso). The chain is 2-oxoisovalerate dehydrogenase subunit alpha, mitochondrial from Caenorhabditis elegans.